The sequence spans 129 residues: MAKEATRVRRRERKNITSGVAHVNSSFNNTMITITDAQGNAIAWSSAGAKGFKGSRKSTPFAAQIAAEDCAKKAQEHGMKSLEVEVCGPGSGRESALRALQAAGFMITSIRDVTPIPHNGCRPRKKRRV.

This sequence belongs to the universal ribosomal protein uS11 family. Part of the 30S ribosomal subunit. Interacts with proteins S7 and S18. Binds to IF-3.

Located on the platform of the 30S subunit, it bridges several disparate RNA helices of the 16S rRNA. Forms part of the Shine-Dalgarno cleft in the 70S ribosome. In Sinorhizobium medicae (strain WSM419) (Ensifer medicae), this protein is Small ribosomal subunit protein uS11.